The following is a 460-amino-acid chain: Nuclear transport factor 2 (460 aa).

In terms of domain architecture, NTF2 spans 15-131 (VGRAFVEQYY…YFVLNDVFRF (117 aa)). Disordered stretches follow at residues 207–226 (EPPT…GDAP), 238–289 (KSSP…VDVE), and 361–460 (RQAV…GGSS). Residues 293–370 (HSIYVRNLPF…RQAVVEEKKT (78 aa)) form the RRM domain. The span at 373 to 382 (RGGGNNGGSR) shows a compositional bias: gly residues. Low complexity predominate over residues 383-394 (GRYFSGRGSFRN). Gly residues-rich tracts occupy residues 399–416 (GGRG…GGEF) and 450–460 (GRGGARGGGSS).

As to quaternary structure, interacts with MBD6.

It localises to the cytoplasm. It is found in the nucleus. Its function is as follows. Involved in RNA-directed DNA methylation (RdDM). In Arabidopsis thaliana (Mouse-ear cress), this protein is Nuclear transport factor 2.